Reading from the N-terminus, the 180-residue chain is Probable RNA 2'-phosphotransferase (180 aa).

The protein belongs to the KptA/TPT1 family.

Removes the 2'-phosphate from RNA via an intermediate in which the phosphate is ADP-ribosylated by NAD followed by a presumed transesterification to release the RNA and generate ADP-ribose 1''-2''-cyclic phosphate (APPR&gt;P). May function as an ADP-ribosylase. This chain is Probable RNA 2'-phosphotransferase, found in Thermococcus kodakarensis (strain ATCC BAA-918 / JCM 12380 / KOD1) (Pyrococcus kodakaraensis (strain KOD1)).